Reading from the N-terminus, the 1032-residue chain is Caspase recruitment domain-containing protein 10 (1032 aa).

3 disordered regions span residues 1-23, 253-276, and 481-553; these read MPGR…SEAE, RARG…EPDN, and EFPS…MSDI. The residue at position 18 (S18) is a Phosphoserine. Positions 23–115 constitute a CARD domain; it reads EEDALWERIE…EHFTLLTGQE (93 aa). Residues 138–456 adopt a coiled-coil conformation; that stretch reads TEVRRLREAR…LEVQLQRAQG (319 aa). Composition is skewed to basic and acidic residues over residues 261 to 276 and 504 to 517; these read AEEK…EPDN and HNSE…KEIN.

In terms of assembly, CARD10 and BCL10 bind to each other by CARD-CARD interaction. They both participate in a complex with MALT1, where MALT1 binds to BCL10. Interacts with TMEM43; this interaction is essential for EGFR-mediated NF-kappa-B activation. As to expression, detected in adult heart, kidney and liver; lower levels in intestine, placenta, muscle and lung. Also found in fetal lung, liver and kidney.

The protein resides in the cytoplasm. Scaffold protein that plays an important role in mediating the activation of NF-kappa-B via BCL10 or EGFR. The polypeptide is Caspase recruitment domain-containing protein 10 (CARD10) (Homo sapiens (Human)).